The chain runs to 400 residues: Argininosuccinate synthase (400 aa).

Residues 10 to 18 and Ala38 contribute to the ATP site; that span reads AYSGGVDTS. An L-citrulline-binding site is contributed by Tyr89. Gly119 provides a ligand contact to ATP. L-aspartate is bound by residues Thr121, Asn125, and Asp126. Asn125 lines the L-citrulline pocket. L-citrulline contacts are provided by Arg129, Ser177, Ser186, Glu262, and Tyr274.

Belongs to the argininosuccinate synthase family. Type 1 subfamily. In terms of assembly, homotetramer.

The protein resides in the cytoplasm. The enzyme catalyses L-citrulline + L-aspartate + ATP = 2-(N(omega)-L-arginino)succinate + AMP + diphosphate + H(+). It functions in the pathway amino-acid biosynthesis; L-arginine biosynthesis; L-arginine from L-ornithine and carbamoyl phosphate: step 2/3. The chain is Argininosuccinate synthase from Prochlorococcus marinus (strain NATL2A).